We begin with the raw amino-acid sequence, 80 residues long: Beta-toxin KAaH2 (80 aa).

The first 22 residues, 1–22 (MMKLMLFSIIVILFSLIGSIHG), serve as a signal peptide directing secretion. Positions 25–80 (VPGNYPLDSSDDTYLCAPLGENPSCIQICRKHGVKYGYCYAFQCWCEYLEDKNVKI) constitute an LCN-type CS-alpha/beta domain. 3 disulfide bridges follow: Cys-40–Cys-63, Cys-49–Cys-68, and Cys-53–Cys-70.

This sequence belongs to the long (3 C-C) scorpion toxin superfamily. Sodium/Potassium channel inhibitor family. In terms of tissue distribution, expressed by the venom gland.

It localises to the secreted. Its function is as follows. Weakly inhibits the vertebrate potassium channel Kv1.1/KCNA1. This Androctonus australis (Sahara scorpion) protein is Beta-toxin KAaH2.